We begin with the raw amino-acid sequence, 481 residues long: Aromatic amino acid aminotransferase DDB_G0272014 (481 aa).

The residue at position 300 (K300) is an N6-(pyridoxal phosphate)lysine.

Belongs to the class-I pyridoxal-phosphate-dependent aminotransferase family. Requires pyridoxal 5'-phosphate as cofactor.

The protein resides in the cytoplasm. It carries out the reaction an aromatic L-alpha-amino acid + 2-oxoglutarate = an aromatic oxo-acid + L-glutamate. Has aromatic amino acid transaminase activity. This Dictyostelium discoideum (Social amoeba) protein is Aromatic amino acid aminotransferase DDB_G0272014.